We begin with the raw amino-acid sequence, 249 residues long: Proteasome activator complex subunit 1 (249 aa).

The disordered stretch occupies residues 60 to 102; it reads PLDIPVPDPVKEKEKEERKKQQEKEEKDEKKKGDEDDKGPPCG. Over residues 68–98 the composition is skewed to basic and acidic residues; sequence PVKEKEKEERKKQQEKEEKDEKKKGDEDDKG.

It belongs to the PA28 family. As to quaternary structure, heterodimer of PSME1 and PSME2, which forms a hexameric ring. PSME1 can form homoheptamers.

In terms of biological role, implicated in immunoproteasome assembly and required for efficient antigen processing. The PA28 activator complex enhances the generation of class I binding peptides by altering the cleavage pattern of the proteasome. In Rattus norvegicus (Rat), this protein is Proteasome activator complex subunit 1 (Psme1).